We begin with the raw amino-acid sequence, 199 residues long: Recombination protein RecR (199 aa).

The C4-type zinc finger occupies 58–73; it reads CQRCFHLSSEDLCNIC. One can recognise a Toprim domain in the interval 81–175; the sequence is QTICVVADPR…RVTRIAFGLP (95 aa).

This sequence belongs to the RecR family.

In terms of biological role, may play a role in DNA repair. It seems to be involved in an RecBC-independent recombinational process of DNA repair. It may act with RecF and RecO. In Synechococcus elongatus (strain ATCC 33912 / PCC 7942 / FACHB-805) (Anacystis nidulans R2), this protein is Recombination protein RecR.